The following is a 500-amino-acid chain: Probable cytosol aminopeptidase (500 aa).

Mn(2+) is bound by residues K265 and D270. K277 is an active-site residue. The Mn(2+) site is built by D288, D347, and E349. The active site involves R351.

The protein belongs to the peptidase M17 family. It depends on Mn(2+) as a cofactor.

The protein resides in the cytoplasm. The catalysed reaction is Release of an N-terminal amino acid, Xaa-|-Yaa-, in which Xaa is preferably Leu, but may be other amino acids including Pro although not Arg or Lys, and Yaa may be Pro. Amino acid amides and methyl esters are also readily hydrolyzed, but rates on arylamides are exceedingly low.. The enzyme catalyses Release of an N-terminal amino acid, preferentially leucine, but not glutamic or aspartic acids.. Presumably involved in the processing and regular turnover of intracellular proteins. Catalyzes the removal of unsubstituted N-terminal amino acids from various peptides. The chain is Probable cytosol aminopeptidase from Bdellovibrio bacteriovorus (strain ATCC 15356 / DSM 50701 / NCIMB 9529 / HD100).